Reading from the N-terminus, the 701-residue chain is Elongation factor G (701 aa).

Residues 8–290 enclose the tr-type G domain; the sequence is SLYRNIGISA…AVVELLPAPT (283 aa). Residues 17–24, 88–92, and 142–145 contribute to the GTP site; these read AHIDAGKT, DTPGH, and NKMD.

The protein belongs to the TRAFAC class translation factor GTPase superfamily. Classic translation factor GTPase family. EF-G/EF-2 subfamily.

It is found in the cytoplasm. In terms of biological role, catalyzes the GTP-dependent ribosomal translocation step during translation elongation. During this step, the ribosome changes from the pre-translocational (PRE) to the post-translocational (POST) state as the newly formed A-site-bound peptidyl-tRNA and P-site-bound deacylated tRNA move to the P and E sites, respectively. Catalyzes the coordinated movement of the two tRNA molecules, the mRNA and conformational changes in the ribosome. The sequence is that of Elongation factor G from Neisseria meningitidis serogroup C (strain 053442).